A 100-amino-acid chain; its full sequence is Ubiquitin-related modifier 1 homolog (100 aa).

Gly100 bears the 1-thioglycine mark. Gly100 is covalently cross-linked (Glycyl lysine isopeptide (Gly-Lys) (interchain with K-? in acceptor proteins)).

It belongs to the URM1 family. Interacts with cer. Post-translationally, C-terminal thiocarboxylation occurs in 2 steps, it is first acyl-adenylated (-COAMP) via the hesA/moeB/thiF part of the MOCS3 homolog, then thiocarboxylated (-COSH) via the rhodanese domain of the MOCS3 homolog.

It is found in the cytoplasm. The protein operates within tRNA modification; 5-methoxycarbonylmethyl-2-thiouridine-tRNA biosynthesis. Its function is as follows. Acts as a sulfur carrier required for 2-thiolation of mcm(5)S(2)U at tRNA wobble positions of cytosolic tRNA(Lys), tRNA(Glu) and tRNA(Gln). Serves as sulfur donor in tRNA 2-thiolation reaction by being thiocarboxylated (-COSH) at its C-terminus by MOCS3. The sulfur is then transferred to tRNA to form 2-thiolation of mcm(5)S(2)U. Also acts as a ubiquitin-like protein (UBL) that is covalently conjugated via an isopeptide bond to lysine residues of target proteins such as Prx2/Jafrac1, Ciao1, Eip71CD and GILT1. The thiocarboxylated form serves as substrate for conjugation and oxidative stress specifically induces the formation of UBL-protein conjugates. The sequence is that of Ubiquitin-related modifier 1 homolog from Drosophila willistoni (Fruit fly).